A 297-amino-acid chain; its full sequence is Alpha-tubulin N-acetyltransferase 1 (297 aa).

Residues 1 to 184 (MDFPYDLNAL…NNFVVFAGFF (184 aa)) form the N-acetyltransferase domain. Acetyl-CoA contacts are provided by residues 118 to 131 (FYVTETLQRHGYGS) and 154 to 163 (SPKFLSFLEK). Residues 226–297 (FVRPGGPPHS…SLNRSRLSFH (72 aa)) form a disordered region. Residues 230-240 (GGPPHSPPLLP) show a composition bias toward pro residues. Residues 241 to 264 (SSPQSRSLSVGSSPSRAPLRPAAA) are compositionally biased toward low complexity. Polar residues-rich tracts occupy residues 266–278 (VLQQGQTPSSPLN) and 286–297 (TSSLNRSRLSFH).

This sequence belongs to the acetyltransferase ATAT1 family. As to quaternary structure, monomer.

The protein localises to the cytoplasm. The protein resides in the membrane. It localises to the clathrin-coated pit. Its subcellular location is the cell junction. It is found in the focal adhesion. The protein localises to the cell projection. The protein resides in the axon. It localises to the cytoskeleton. Its subcellular location is the spindle. The catalysed reaction is L-lysyl-[alpha-tubulin] + acetyl-CoA = N(6)-acetyl-L-lysyl-[alpha-tubulin] + CoA + H(+). Its function is as follows. Specifically acetylates 'Lys-40' in alpha-tubulin on the lumenal side of microtubules. Promotes microtubule destabilization and accelerates microtubule dynamics; this activity may be independent of acetylation activity. Acetylates alpha-tubulin with a slow enzymatic rate, due to a catalytic site that is not optimized for acetyl transfer. Enters the microtubule through each end and diffuses quickly throughout the lumen of microtubules. Acetylates only long/old microtubules because of its slow acetylation rate since it does not have time to act on dynamically unstable microtubules before the enzyme is released. May be involved in neuron development. Acetylates alpha-tubulin in neurons, but not in cilia. The chain is Alpha-tubulin N-acetyltransferase 1 from Danio rerio (Zebrafish).